We begin with the raw amino-acid sequence, 49 residues long: IgW transmembrane form Tm2T7/Tm7T7/Tm3T3 (49 aa).

Asn3 carries an N-linked (GlcNAc...) asparagine glycan. The chain crosses the membrane as a helical span at residues 25–45 (VAAFAILFILSFLYSTFVTVV).

Expressed in the spleen. May also be expressed in other lymphoid tissues.

Its subcellular location is the membrane. This chain is IgW transmembrane form Tm2T7/Tm7T7/Tm3T3, found in Heterodontus francisci (Horn shark).